A 291-amino-acid chain; its full sequence is 33 kDa chaperonin (291 aa).

2 disulfide bridges follow: cysteine 235/cysteine 237 and cysteine 268/cysteine 271.

It belongs to the HSP33 family. In terms of processing, under oxidizing conditions two disulfide bonds are formed involving the reactive cysteines. Under reducing conditions zinc is bound to the reactive cysteines and the protein is inactive.

It localises to the cytoplasm. In terms of biological role, redox regulated molecular chaperone. Protects both thermally unfolding and oxidatively damaged proteins from irreversible aggregation. Plays an important role in the bacterial defense system toward oxidative stress. This Bacillus velezensis (strain DSM 23117 / BGSC 10A6 / LMG 26770 / FZB42) (Bacillus amyloliquefaciens subsp. plantarum) protein is 33 kDa chaperonin.